A 171-amino-acid polypeptide reads, in one-letter code: AN1-type zinc finger protein 2A (171 aa).

AN1-type zinc fingers lie at residues 4-52 (PDLG…KKDV) and 94-142 (KVFT…SSVS). Residues cysteine 10, cysteine 15, cysteine 25, cysteine 28, cysteine 33, histidine 36, histidine 42, cysteine 44, cysteine 100, cysteine 105, cysteine 115, cysteine 118, cysteine 123, histidine 126, histidine 132, and cysteine 134 each coordinate Zn(2+). The disordered stretch occupies residues 135–171 (QAGSSSVSRGRSSASRAAEQKPSGVSWLAQRLRRTVK). The segment covering 136 to 151 (AGSSSVSRGRSSASRA) has biased composition (low complexity).

The protein resides in the cytoplasm. Its subcellular location is the nucleus. The protein is AN1-type zinc finger protein 2A (Zfand2a) of Rattus norvegicus (Rat).